A 484-amino-acid polypeptide reads, in one-letter code: tRNA sulfurtransferase (484 aa).

The THUMP domain occupies Q63–R167. ATP contacts are provided by residues L185–I186, K267, G289, and Q298. C346 and C458 are disulfide-bonded. The 79-residue stretch at I406–P484 folds into the Rhodanese domain. C458 serves as the catalytic Cysteine persulfide intermediate.

Belongs to the ThiI family.

The protein resides in the cytoplasm. The catalysed reaction is [ThiI sulfur-carrier protein]-S-sulfanyl-L-cysteine + a uridine in tRNA + 2 reduced [2Fe-2S]-[ferredoxin] + ATP + H(+) = [ThiI sulfur-carrier protein]-L-cysteine + a 4-thiouridine in tRNA + 2 oxidized [2Fe-2S]-[ferredoxin] + AMP + diphosphate. It carries out the reaction [ThiS sulfur-carrier protein]-C-terminal Gly-Gly-AMP + S-sulfanyl-L-cysteinyl-[cysteine desulfurase] + AH2 = [ThiS sulfur-carrier protein]-C-terminal-Gly-aminoethanethioate + L-cysteinyl-[cysteine desulfurase] + A + AMP + 2 H(+). It participates in cofactor biosynthesis; thiamine diphosphate biosynthesis. Catalyzes the ATP-dependent transfer of a sulfur to tRNA to produce 4-thiouridine in position 8 of tRNAs, which functions as a near-UV photosensor. Also catalyzes the transfer of sulfur to the sulfur carrier protein ThiS, forming ThiS-thiocarboxylate. This is a step in the synthesis of thiazole, in the thiamine biosynthesis pathway. The sulfur is donated as persulfide by IscS. This Shewanella sp. (strain MR-4) protein is tRNA sulfurtransferase.